A 391-amino-acid polypeptide reads, in one-letter code: NADH-quinone oxidoreductase subunit D (391 aa).

Belongs to the complex I 49 kDa subunit family. In terms of assembly, NDH-1 is composed of 14 different subunits. Subunits NuoB, C, D, E, F, and G constitute the peripheral sector of the complex.

Its subcellular location is the cell inner membrane. It catalyses the reaction a quinone + NADH + 5 H(+)(in) = a quinol + NAD(+) + 4 H(+)(out). Its function is as follows. NDH-1 shuttles electrons from NADH, via FMN and iron-sulfur (Fe-S) centers, to quinones in the respiratory chain. The immediate electron acceptor for the enzyme in this species is believed to be ubiquinone. Couples the redox reaction to proton translocation (for every two electrons transferred, four hydrogen ions are translocated across the cytoplasmic membrane), and thus conserves the redox energy in a proton gradient. In Rickettsia canadensis (strain McKiel), this protein is NADH-quinone oxidoreductase subunit D.